The chain runs to 66 residues: Large ribosomal subunit protein bL31 (66 aa).

Cys-16, Cys-18, Cys-36, and Cys-39 together coordinate Zn(2+).

The protein belongs to the bacterial ribosomal protein bL31 family. Type A subfamily. Part of the 50S ribosomal subunit. Requires Zn(2+) as cofactor.

Its function is as follows. Binds the 23S rRNA. The protein is Large ribosomal subunit protein bL31 of Thermodesulfovibrio yellowstonii (strain ATCC 51303 / DSM 11347 / YP87).